The chain runs to 264 residues: Small ribosomal subunit protein eS1 (264 aa).

Lys-34 bears the N6-acetyllysine; alternate mark. Residue Lys-34 forms a Glycyl lysine isopeptide (Lys-Gly) (interchain with G-Cter in SUMO2); alternate linkage. Residue Lys-56 is modified to N6-acetyllysine. Tyr-155 is modified (ADP-ribosyltyrosine). The interval Gly-233–Val-264 is disordered. Position 237 is a phosphoserine (Ser-237). Positions Ala-242–Gly-255 are enriched in basic and acidic residues. Lys-249 carries the N6-acetyllysine; alternate modification. Lys-249 participates in a covalent cross-link: Glycyl lysine isopeptide (Lys-Gly) (interchain with G-Cter in SUMO2); alternate. Position 256 is a phosphotyrosine (Tyr-256). Ser-263 is modified (phosphoserine).

The protein belongs to the eukaryotic ribosomal protein eS1 family. As to quaternary structure, component of the small ribosomal subunit. Mature ribosomes consist of a small (40S) and a large (60S) subunit. The 40S subunit contains about 33 different proteins and 1 molecule of RNA (18S). The 60S subunit contains about 49 different proteins and 3 molecules of RNA (28S, 5.8S and 5S). Identified in a IGF2BP1-dependent mRNP granule complex containing untranslated mRNAs. Binds with high affinity to IPO4. Interacts with DDIT3. Part of the small subunit (SSU) processome, composed of more than 70 proteins and the RNA chaperone small nucleolar RNA (snoRNA) U3. ADP-ribosylated at Tyr-155 by PARP1 in presence of HPF1.

It localises to the cytoplasm. The protein localises to the nucleus. The protein resides in the nucleolus. In terms of biological role, component of the small ribosomal subunit. The ribosome is a large ribonucleoprotein complex responsible for the synthesis of proteins in the cell. Part of the small subunit (SSU) processome, first precursor of the small eukaryotic ribosomal subunit. During the assembly of the SSU processome in the nucleolus, many ribosome biogenesis factors, an RNA chaperone and ribosomal proteins associate with the nascent pre-rRNA and work in concert to generate RNA folding, modifications, rearrangements and cleavage as well as targeted degradation of pre-ribosomal RNA by the RNA exosome. May play a role during erythropoiesis through regulation of transcription factor DDIT3. This Mus musculus (Mouse) protein is Small ribosomal subunit protein eS1 (Rps3a).